The sequence spans 367 residues: Phospho-N-acetylmuramoyl-pentapeptide-transferase (367 aa).

Transmembrane regions (helical) follow at residues 16-36, 62-82, 87-107, 125-145, 158-178, 190-210, 214-234, 240-260, 264-284, and 326-346; these read LLLA…WVHF, TMGG…FNLV, MLLP…DDWL, FWIM…PQPY, VGEV…IVFI, SLAG…TFLA, LTNL…FLWY, QVFM…VVAL, QWIL…STLI, and FVLI…IFGS.

The protein belongs to the glycosyltransferase 4 family. MraY subfamily. Requires Mg(2+) as cofactor.

It localises to the cell membrane. The catalysed reaction is UDP-N-acetyl-alpha-D-muramoyl-L-alanyl-gamma-D-glutamyl-meso-2,6-diaminopimeloyl-D-alanyl-D-alanine + di-trans,octa-cis-undecaprenyl phosphate = di-trans,octa-cis-undecaprenyl diphospho-N-acetyl-alpha-D-muramoyl-L-alanyl-D-glutamyl-meso-2,6-diaminopimeloyl-D-alanyl-D-alanine + UMP. The protein operates within cell wall biogenesis; peptidoglycan biosynthesis. Its function is as follows. Catalyzes the initial step of the lipid cycle reactions in the biosynthesis of the cell wall peptidoglycan: transfers peptidoglycan precursor phospho-MurNAc-pentapeptide from UDP-MurNAc-pentapeptide onto the lipid carrier undecaprenyl phosphate, yielding undecaprenyl-pyrophosphoryl-MurNAc-pentapeptide, known as lipid I. This Chloroflexus aggregans (strain MD-66 / DSM 9485) protein is Phospho-N-acetylmuramoyl-pentapeptide-transferase.